The primary structure comprises 149 residues: MYIGSSMDIQTILEKTLPGLGYELVDFELAAQGTLRVFIDKEGGITVEDCATVSNHLSRVFMVEDIGYKNLEISSPGLDRPLKKAADFVRFAGQNAKIKTRLPIGGQKNFIGKIEGCENDTVTVSFDGKTVQIELGNIDKARLRPEFKF.

The protein belongs to the RimP family.

It localises to the cytoplasm. Functionally, required for maturation of 30S ribosomal subunits. The sequence is that of Ribosome maturation factor RimP from Neisseria gonorrhoeae (strain NCCP11945).